The following is a 185-amino-acid chain: Adenine phosphoribosyltransferase (185 aa).

This sequence belongs to the purine/pyrimidine phosphoribosyltransferase family. Homodimer.

The protein localises to the cytoplasm. The catalysed reaction is AMP + diphosphate = 5-phospho-alpha-D-ribose 1-diphosphate + adenine. It functions in the pathway purine metabolism; AMP biosynthesis via salvage pathway; AMP from adenine: step 1/1. Its function is as follows. Catalyzes a salvage reaction resulting in the formation of AMP, that is energically less costly than de novo synthesis. This is Adenine phosphoribosyltransferase from Rubrobacter xylanophilus (strain DSM 9941 / JCM 11954 / NBRC 16129 / PRD-1).